The following is a 462-amino-acid chain: 7-hydroxymethyl chlorophyll a reductase, chloroplastic (462 aa).

The N-terminal 20 residues, 1 to 20 (MITVVTSRLSLLPPVFSVVN), are a transit peptide targeting the chloroplast.

The protein belongs to the FrhB family. As to quaternary structure, interacts with SGR1, the chlorophyll catabolic enzymes (CCEs) NYC1, NOL and RCCR, and the LHCII complex. Part of a SGR1-CCE-LHCII complex, which acts in chlorophyll breakdown. FAD serves as cofactor. Requires iron-sulfur cluster as cofactor.

The protein localises to the plastid. Its subcellular location is the chloroplast. The enzyme catalyses chlorophyll a + 2 oxidized [2Fe-2S]-[ferredoxin] + H2O = 7(1)-hydroxychlorophyll a + 2 reduced [2Fe-2S]-[ferredoxin] + 2 H(+). Its function is as follows. Probable iron-sulfur flavoprotein that converts 7-hydroxymethyl chlorophyll a to chlorophyll a using ferredoxin as a reducing equivalent. Catalyzes the reduction of a hydroxymethyl group to a methyl group. Belongs to the chlorophyll catabolic enzymes (CCEs). The chain is 7-hydroxymethyl chlorophyll a reductase, chloroplastic (HCAR) from Arabidopsis thaliana (Mouse-ear cress).